We begin with the raw amino-acid sequence, 110 residues long: MTQFSALALLLIVFVAASFAQSYDDVSAEKRAMRNALVRFGRASGGMRNALVRFGKRSPLDEEDFAPESPLQGKRNGAPQPFVRFGRSGQLDHMHDLLSTLQKLKFANNK.

Residues 1–22 form the signal peptide; sequence MTQFSALALLLIVFVAASFAQS. Residues 23-29 constitute a propeptide that is removed on maturation; it reads YDDVSAE. Phenylalanine amide is present on residues Phe40 and Phe54. A disordered region spans residues 60–85; that stretch reads LDEEDFAPESPLQGKRNGAPQPFVRF. Residue Gln72 is modified to Glutamine amide. Phe85 bears the Phenylalanine amide mark. Positions 88–110 are excised as a propeptide; it reads SGQLDHMHDLLSTLQKLKFANNK.

Belongs to the FARP (FMRFamide related peptide) family. As to expression, each flp gene is expressed in a distinct set of neurons. Flp-11 is expressed in the DD, VD and DVB motor neurons, the PVC and URX interneurons, and the AUA, BAG, DA, LUA, and SAB neurons. Also expressed in head muscle, socket or sheath cells and uterine cells. Expressed exclusively in PHC sensory neurons in males. Expressed in AVK and RIS interneurons.

The protein resides in the secreted. Its function is as follows. FMRFamides and FMRFamide-like peptides are neuropeptides. Induces sleep-like quiescence behavior following release from RIS interneuron. Helps to sustain locomotion stop after gamma-aminobutyric acid (GABA) induces fast slowing response. Inhibits the late-stage body bend swimming frequency in animals through several receptors including frpr-3, npr-4 and npr-22. In terms of biological role, potent inhibitor of the activity of the dissected pharyngeal myogenic muscle system. Acts as a ligand for the npr-22 receptor in vitro. Functionally, acts as a ligand for the npr-22 receptor in vitro. This chain is FMRFamide-like neuropeptides 11, found in Caenorhabditis elegans.